Here is a 267-residue protein sequence, read N- to C-terminus: Indole-3-glycerol phosphate synthase 1 (267 aa).

Belongs to the TrpC family.

It carries out the reaction 1-(2-carboxyphenylamino)-1-deoxy-D-ribulose 5-phosphate + H(+) = (1S,2R)-1-C-(indol-3-yl)glycerol 3-phosphate + CO2 + H2O. It participates in amino-acid biosynthesis; L-tryptophan biosynthesis; L-tryptophan from chorismate: step 4/5. This is Indole-3-glycerol phosphate synthase 1 (trpC1) from Ralstonia nicotianae (strain ATCC BAA-1114 / GMI1000) (Ralstonia solanacearum).